The following is a 91-amino-acid chain: Probable Fe(2+)-trafficking protein (91 aa).

This sequence belongs to the Fe(2+)-trafficking protein family.

Functionally, could be a mediator in iron transactions between iron acquisition and iron-requiring processes, such as synthesis and/or repair of Fe-S clusters in biosynthetic enzymes. This Shewanella amazonensis (strain ATCC BAA-1098 / SB2B) protein is Probable Fe(2+)-trafficking protein.